The following is a 918-amino-acid chain: Melanoma-associated antigen E1 (918 aa).

Disordered stretches follow at residues 1–140, 154–227, and 367–388; these read MSLV…GSKA, EQRH…SNGL, and SQMS…ANNP. Residues 8-23 show a composition bias toward basic residues; it reads SRRRRGGRANARRNNG. Composition is skewed to polar residues over residues 70–96, 113–126, and 213–227; these read VPPT…SEMP, GLNT…SEGP, and EDPS…SNGL. 2 consecutive MAGE domains span residues 459-658 and 706-897; these read MEQN…YNEA and LESK…YREA. The tract at residues 704 to 918 is interaction with DTNA; it reads SRLESKARKL…RRPLIVRNLR (215 aa).

Interacts with DTNA. Interacts with TRIM28. As to expression, expressed in cell bodies and dendrites of hippocampal and Purkinje neurons. Also expressed in peripheral nerve, where it localizes to the perineurium and myelin (at protein level). Predominantly expressed in brain and at low levels in the heart, liver, kidney, spleen, testis, lung, thymus, placenta and skeletal muscle.

It is found in the cytoplasm. The protein localises to the perinuclear region. The protein resides in the nucleus. It localises to the cell membrane. May enhance ubiquitin ligase activity of RING-type zinc finger-containing E3 ubiquitin-protein ligases. Proposed to act through recruitment and/or stabilization of the Ubl-conjugating enzyme (E2) at the E3:substrate complex. In Mus musculus (Mouse), this protein is Melanoma-associated antigen E1 (Magee1).